The following is a 203-amino-acid chain: Outer-membrane lipoprotein carrier protein (203 aa).

Positions 1–21 (MKKIAITCALLSSLVASSVWA) are cleaved as a signal peptide.

This sequence belongs to the LolA family. As to quaternary structure, monomer.

The protein resides in the periplasm. In terms of biological role, participates in the translocation of lipoproteins from the inner membrane to the outer membrane. Only forms a complex with a lipoprotein if the residue after the N-terminal Cys is not an aspartate (The Asp acts as a targeting signal to indicate that the lipoprotein should stay in the inner membrane). The chain is Outer-membrane lipoprotein carrier protein from Escherichia coli O139:H28 (strain E24377A / ETEC).